A 422-amino-acid chain; its full sequence is MRNIFKRNQEPNVAPATTTATMPLAPVAPADNSTESTGPGESQEDMFAKLKEKFFNEINKIPLPPWALIAMAVVAGLLLLTCCFCICKKCCCKKKKNKKEKGKGMKNAMNMKDMKGGQDDDDAETGLTEGEGEGEEEKEPENLGKLQFSLDYDFQANQLTVGVLQAAELPALDMGGTSDPYVKVFLLPDKKKKYETKVHRKTLNPAFNETFTFKVPYQELAGKTLVMAIYDFDRFSKHDIIGEVKVPMNTVDLGQPIEEWRDLQGGEKEEPEKLGDICTSLRYVPTAGKLTVCILEAKNLKKMDVGGLSDPYVKIHLMQNGKRLKKKKTTVKKKTLNPYFNESFSFEIPFEQIQKVQVVVTVLDYDKLGKNEAIGKIFVGSNATGTELRHWSDMLANPRRPIAQWHSLKPEEEVDALLGKNK.

Residues 1 to 43 form a disordered region; sequence MRNIFKRNQEPNVAPATTTATMPLAPVAPADNSTESTGPGESQ. The Vesicular segment spans residues 1 to 60; it reads MRNIFKRNQEPNVAPATTTATMPLAPVAPADNSTESTGPGESQEDMFAKLKEKFFNEINK. The segment covering 14-30 has biased composition (low complexity); that stretch reads APATTTATMPLAPVAPA. Over residues 31–40 the composition is skewed to polar residues; it reads DNSTESTGPG. N-linked (GlcNAc...) asparagine glycosylation occurs at asparagine 32. The chain crosses the membrane as a helical span at residues 61–87; the sequence is IPLPPWALIAMAVVAGLLLLTCCFCIC. At 88–422 the chain is on the cytoplasmic side; the sequence is KKCCCKKKKN…EVDALLGKNK (335 aa). A disordered region spans residues 102 to 141; it reads GKGMKNAMNMKDMKGGQDDDDAETGLTEGEGEGEEEKEPE. Over residues 119 to 139 the composition is skewed to acidic residues; sequence DDDDAETGLTEGEGEGEEEKE. A phosphothreonine mark is found at threonine 125 and threonine 128. Residues 136-382 form a phospholipid binding region; sequence EEKEPENLGK…AIGKIFVGSN (247 aa). C2 domains are found at residues 142–261 and 273–406; these read NLGK…EEWR and KLGD…AQWH. 3 residues coordinate Ca(2+): leucine 172, aspartate 173, and aspartate 179. Threonine 202 is subject to Phosphothreonine. Phosphotyrosine is present on tyrosine 230. 10 residues coordinate Ca(2+): aspartate 231, phenylalanine 232, aspartate 233, serine 236, lysine 237, aspartate 239, aspartate 304, aspartate 310, aspartate 364, and aspartate 366. Threonine 386 carries the phosphothreonine modification.

It belongs to the synaptotagmin family. Homotetramer. Heterodimer; heterodimerizes with SYT1 in presence of calcium. Interacts with SCAMP5. Interacts with STON2. Interacts with PRRT2. As to quaternary structure, (Microbial infection) Interacts with C.botulinum neurotoxin type B (BoNT/B, botB). In terms of assembly, (Microbial infection) Interacts with C.botulinum neurotoxin type G (BoNT/G, botG). Ca(2+) is required as a cofactor. Phosphorylation at Thr-202 by WNK1, changes the calcium requirement for SYT2-binding to phospholipid membranes.

The protein resides in the cytoplasmic vesicle. Its subcellular location is the secretory vesicle. It is found in the synaptic vesicle membrane. The protein localises to the chromaffin granule membrane. It localises to the cytoplasm. In terms of biological role, exhibits calcium-dependent phospholipid and inositol polyphosphate binding properties. May have a regulatory role in the membrane interactions during trafficking of synaptic vesicles at the active zone of the synapse. Plays a role in dendrite formation by melanocytes. (Microbial infection) Receptor for C.botulinum neurotoxin type B (BoNT/B, botB); interaction is improved in the presence of gangliosides. The toxin binds via the vesicular domain (residues 47-60). Its function is as follows. (Microbial infection) Receptor for C.botulinum neurotoxin type G (BoNT/G, botG); gangliosides are not required for (or only very slightly improve) binding to a membrane-anchored receptor fragment. The toxin binds via the vesicular domain (residues 47-55). The chain is Synaptotagmin-2 from Mus musculus (Mouse).